The primary structure comprises 72 residues: MLALSRKLNESIMLGNDIEITILEIKGDQVKIGIKAPKSVPIYRKEIYLQIQESNKEAIDGGVSLEAISKLF.

Belongs to the CsrA/RsmA family. In terms of assembly, homodimer; the beta-strands of each monomer intercalate to form a hydrophobic core, while the alpha-helices form wings that extend away from the core.

It localises to the cytoplasm. A translational regulator that binds mRNA to regulate translation initiation and/or mRNA stability. Usually binds in the 5'-UTR at or near the Shine-Dalgarno sequence preventing ribosome-binding, thus repressing translation. Its main target seems to be the major flagellin gene, while its function is anatagonized by FliW. The polypeptide is Translational regulator CsrA (Lachnoclostridium phytofermentans (strain ATCC 700394 / DSM 18823 / ISDg) (Clostridium phytofermentans)).